We begin with the raw amino-acid sequence, 568 residues long: Dihydroxy-acid dehydratase (568 aa).

Cysteine 59 provides a ligand contact to [2Fe-2S] cluster. Mg(2+) is bound at residue aspartate 91. Cysteine 132 is a [2Fe-2S] cluster binding site. Residues aspartate 133 and lysine 134 each coordinate Mg(2+). Lysine 134 is modified (N6-carboxylysine). Cysteine 204 contacts [2Fe-2S] cluster. Glutamate 456 contacts Mg(2+). Catalysis depends on serine 482, which acts as the Proton acceptor.

It belongs to the IlvD/Edd family. Homodimer. Requires [2Fe-2S] cluster as cofactor. The cofactor is Mg(2+).

The catalysed reaction is (2R)-2,3-dihydroxy-3-methylbutanoate = 3-methyl-2-oxobutanoate + H2O. It carries out the reaction (2R,3R)-2,3-dihydroxy-3-methylpentanoate = (S)-3-methyl-2-oxopentanoate + H2O. It participates in amino-acid biosynthesis; L-isoleucine biosynthesis; L-isoleucine from 2-oxobutanoate: step 3/4. Its pathway is amino-acid biosynthesis; L-valine biosynthesis; L-valine from pyruvate: step 3/4. Functionally, functions in the biosynthesis of branched-chain amino acids. Catalyzes the dehydration of (2R,3R)-2,3-dihydroxy-3-methylpentanoate (2,3-dihydroxy-3-methylvalerate) into 2-oxo-3-methylpentanoate (2-oxo-3-methylvalerate) and of (2R)-2,3-dihydroxy-3-methylbutanoate (2,3-dihydroxyisovalerate) into 2-oxo-3-methylbutanoate (2-oxoisovalerate), the penultimate precursor to L-isoleucine and L-valine, respectively. The protein is Dihydroxy-acid dehydratase of Verminephrobacter eiseniae (strain EF01-2).